The primary structure comprises 306 residues: Homoserine kinase (306 aa).

An ATP-binding site is contributed by 91–101 (PLARGLGSSAA).

Belongs to the GHMP kinase family. Homoserine kinase subfamily.

The protein resides in the cytoplasm. The catalysed reaction is L-homoserine + ATP = O-phospho-L-homoserine + ADP + H(+). It functions in the pathway amino-acid biosynthesis; L-threonine biosynthesis; L-threonine from L-aspartate: step 4/5. Its function is as follows. Catalyzes the ATP-dependent phosphorylation of L-homoserine to L-homoserine phosphate. This is Homoserine kinase from Bacillus licheniformis (strain ATCC 14580 / DSM 13 / JCM 2505 / CCUG 7422 / NBRC 12200 / NCIMB 9375 / NCTC 10341 / NRRL NRS-1264 / Gibson 46).